The sequence spans 134 residues: Holo-[acyl-carrier-protein] synthase (134 aa).

The Mg(2+) site is built by Asp8 and Glu57.

The protein belongs to the P-Pant transferase superfamily. AcpS family. Requires Mg(2+) as cofactor.

Its subcellular location is the cytoplasm. It carries out the reaction apo-[ACP] + CoA = holo-[ACP] + adenosine 3',5'-bisphosphate + H(+). Transfers the 4'-phosphopantetheine moiety from coenzyme A to a Ser of acyl-carrier-protein. This is Holo-[acyl-carrier-protein] synthase from Brucella abortus (strain S19).